Here is a 547-residue protein sequence, read N- to C-terminus: GMP synthase [glutamine-hydrolyzing] (547 aa).

Positions K12–D210 constitute a Glutamine amidotransferase type-1 domain. Catalysis depends on C89, which acts as the Nucleophile. Active-site residues include H184 and E186. The GMPS ATP-PPase domain occupies W211–R403. S238–S244 lines the ATP pocket.

In terms of assembly, homodimer.

The enzyme catalyses XMP + L-glutamine + ATP + H2O = GMP + L-glutamate + AMP + diphosphate + 2 H(+). Its pathway is purine metabolism; GMP biosynthesis; GMP from XMP (L-Gln route): step 1/1. Catalyzes the synthesis of GMP from XMP. This chain is GMP synthase [glutamine-hydrolyzing], found in Ralstonia nicotianae (strain ATCC BAA-1114 / GMI1000) (Ralstonia solanacearum).